Reading from the N-terminus, the 228-residue chain is Ribulose-phosphate 3-epimerase (228 aa).

Ser-9 contacts substrate. Residues His-34, Asp-36, His-68, and Asp-177 each coordinate a divalent metal cation. The active-site Proton acceptor is Asp-36. Residues His-68, 177–179 (DGG), and 199–200 (GS) each bind substrate. The active-site Proton donor is Asp-177.

It belongs to the ribulose-phosphate 3-epimerase family. A divalent metal cation is required as a cofactor.

It catalyses the reaction D-ribulose 5-phosphate = D-xylulose 5-phosphate. The protein operates within carbohydrate degradation. In terms of biological role, catalyzes the reversible epimerization of D-ribulose 5-phosphate to D-xylulose 5-phosphate. The chain is Ribulose-phosphate 3-epimerase from Buchnera aphidicola subsp. Acyrthosiphon pisum (strain APS) (Acyrthosiphon pisum symbiotic bacterium).